Reading from the N-terminus, the 248-residue chain is Anamorsin homolog (248 aa).

The segment at Phe4–Phe129 is N-terminal SAM-like domain. Residues Ala130–Lys161 are linker. Cys172, Cys181, Cys184, and Cys186 together coordinate [2Fe-2S] cluster. The segment at Cys172–Cys186 is fe-S binding site A. Cys209, Cys212, Cys220, and Cys223 together coordinate [4Fe-4S] cluster. Short sequence motifs (cx2C motif) lie at residues Cys209 to Cys212 and Cys220 to Cys223. A fe-S binding site B region spans residues Cys209–Cys223.

Belongs to the anamorsin family. Monomer. [2Fe-2S] cluster serves as cofactor. Requires [4Fe-4S] cluster as cofactor.

Its subcellular location is the cytoplasm. The protein resides in the mitochondrion intermembrane space. Functionally, component of the cytosolic iron-sulfur (Fe-S) protein assembly (CIA) machinery. Required for the maturation of extramitochondrial Fe-S proteins. Part of an electron transfer chain functioning in an early step of cytosolic Fe-S biogenesis, facilitating the de novo assembly of a [4Fe-4S] cluster on the cytosolic Fe-S scaffold complex. Electrons are transferred from NADPH via a FAD- and FMN-containing diflavin oxidoreductase. Together with the diflavin oxidoreductase, also required for the assembly of the diferric tyrosyl radical cofactor of ribonucleotide reductase (RNR), probably by providing electrons for reduction during radical cofactor maturation in the catalytic small subunit. This chain is Anamorsin homolog, found in Drosophila erecta (Fruit fly).